The sequence spans 108 residues: Tyrosine-protein phosphatase 5 (108 aa).

Positions 1–108 (QESTVIVMLT…QGNNPSPIIV (108 aa)) constitute a Tyrosine-protein phosphatase domain. D78 is a binding site for substrate.

It belongs to the protein-tyrosine phosphatase family.

It catalyses the reaction O-phospho-L-tyrosyl-[protein] + H2O = L-tyrosyl-[protein] + phosphate. This chain is Tyrosine-protein phosphatase 5 (STY-5), found in Styela plicata (Wrinkled sea squirt).